The following is a 147-amino-acid chain: MKYMTVTDLNNAGATVIGTIKGGEWFLGTPHKDILSKPGFYFLVSEFDGSCVSARFYVGNQRSKQGFSAVLSHIRQRRSQLARTIANNNMAYTVFYLPASKMKPLTTGFGKGQLALAFTRNHHSEYQTLEEMNRMLADNFKFVLQAY.

Disorganizes the host nucleoid and inhibits replication, but without host DNA cleavage or degradation. Only the architecture of the nucleoid is affected. May act on the host chromosomal sequences that determine the structure of the nucleoid. Binds to dsDNA but not to ssDNA. The protein is Nucleoid disruption protein (ndd) of Enterobacteria phage RB70 (Bacteriophage RB70).